Reading from the N-terminus, the 196-residue chain is N-(5'-phosphoribosyl)anthranilate isomerase (196 aa).

This sequence belongs to the TrpF family.

It carries out the reaction N-(5-phospho-beta-D-ribosyl)anthranilate = 1-(2-carboxyphenylamino)-1-deoxy-D-ribulose 5-phosphate. It functions in the pathway amino-acid biosynthesis; L-tryptophan biosynthesis; L-tryptophan from chorismate: step 3/5. The sequence is that of N-(5'-phosphoribosyl)anthranilate isomerase from Sulfurovum sp. (strain NBC37-1).